A 195-amino-acid polypeptide reads, in one-letter code: Probable nicotinate-nucleotide adenylyltransferase (195 aa).

Belongs to the NadD family.

It catalyses the reaction nicotinate beta-D-ribonucleotide + ATP + H(+) = deamido-NAD(+) + diphosphate. Its pathway is cofactor biosynthesis; NAD(+) biosynthesis; deamido-NAD(+) from nicotinate D-ribonucleotide: step 1/1. In terms of biological role, catalyzes the reversible adenylation of nicotinate mononucleotide (NaMN) to nicotinic acid adenine dinucleotide (NaAD). This chain is Probable nicotinate-nucleotide adenylyltransferase, found in Mesorhizobium japonicum (strain LMG 29417 / CECT 9101 / MAFF 303099) (Mesorhizobium loti (strain MAFF 303099)).